Reading from the N-terminus, the 299-residue chain is Tetrahydromethanopterin S-methyltransferase subunit E (299 aa).

The next 6 helical transmembrane spans lie at 57–79, 95–115, 133–153, 158–178, 237–257, and 262–282; these read AISG…AWAL, GVAA…RTVG, IGPI…AAYL, LGNP…VGAI, GLCF…GNII, and VTKT…AAGI.

The protein belongs to the MtrE family. The complex is composed of 8 subunits; MtrA, MtrB, MtrC, MtrD, MtrE, MtrF, MtrG and MtrH.

It localises to the cell membrane. It catalyses the reaction 5-methyl-5,6,7,8-tetrahydromethanopterin + coenzyme M + 2 Na(+)(in) = 5,6,7,8-tetrahydromethanopterin + methyl-coenzyme M + 2 Na(+)(out). It participates in one-carbon metabolism; methanogenesis from CO(2); methyl-coenzyme M from 5,10-methylene-5,6,7,8-tetrahydromethanopterin: step 2/2. Functionally, part of a complex that catalyzes the formation of methyl-coenzyme M and tetrahydromethanopterin from coenzyme M and methyl-tetrahydromethanopterin. This is an energy-conserving, sodium-ion translocating step. This Methanococcus maripaludis (strain C5 / ATCC BAA-1333) protein is Tetrahydromethanopterin S-methyltransferase subunit E.